The following is a 238-amino-acid chain: Fatty acid metabolism regulator protein (238 aa).

One can recognise an HTH gntR-type domain in the interval 6 to 74; it reads KGPASFAEKY…HGKPTRVNNF (69 aa). The segment at residues 34–53 is a DNA-binding region (H-T-H motif); it reads ERELSELIGVTRTTLREVLQ.

As to quaternary structure, homodimer.

The protein resides in the cytoplasm. Functionally, multifunctional regulator of fatty acid metabolism. This is Fatty acid metabolism regulator protein from Shewanella baltica (strain OS185).